We begin with the raw amino-acid sequence, 497 residues long: MEKTEEENYSIKELGEKGSDSQEDVAVIFAEKHPIIDKSLNRKLKLKTDLWVMPLLCLISAFQYMDKSTSNYSSIMGIRTDLNMVGNQYNWVGTSFYLGFMVFSLPLSTLLQKFPLSKVTSAFIVAWGILMTLTCLVHSYASYIATRTLLGILESVITPAFVLFIAQWYRKEEQFFRMAFLVAWNGLGGLIGGSMSYGLYKRELENNLTMSPWRILFIITGLITIINGVFIFIHIPDEPSKAWFLSEKEKDLVLKRLDTDHAGLGSKKFKKYQILEACRDVRMYLYFFLQIAVAIPNGGLSNFSSIMLKNLGYVKGKALLMNMPTSSISFAALTLFGLIPEFTNRRMDIALVGLAINLTSGSLIAFAKPTHAQLAGYWLFGISPIPYICILSCISSNSAGHTKKVFMSAVSMIGYCVGNMVGPQTFRSTQAPKYQGAKVSFVVCYCVAIFIIIAIYAVNVRENRRRDEKNEYLSNELSEEDKKDLTDFENPEFRYSI.

Helical transmembrane passes span Trp-91–Leu-111, Val-119–Ser-139, Leu-149–Tyr-169, Ala-179–Leu-199, Ile-215–Ile-235, Met-283–Phe-303, Leu-319–Ile-339, Met-347–Ala-367, Leu-374–Ile-394, Phe-406–Phe-426, and Val-439–Asn-459.

It belongs to the major facilitator superfamily. Allantoate permease family.

Its subcellular location is the golgi apparatus. The protein localises to the membrane. This is an uncharacterized protein from Schizosaccharomyces pombe (strain 972 / ATCC 24843) (Fission yeast).